The following is a 461-amino-acid chain: Probable ribonuclease FAU-1 (461 aa).

Residues 89 to 158 enclose the S1 motif domain; that stretch reads GAVFYGEVTE…ARPSLATALR (70 aa).

It belongs to the FAU-1 family.

Probable RNase involved in rRNA stability through maturation and/or degradation of precursor rRNAs. Binds to RNA in loop regions with AU-rich sequences. The protein is Probable ribonuclease FAU-1 of Natronomonas pharaonis (strain ATCC 35678 / DSM 2160 / CIP 103997 / JCM 8858 / NBRC 14720 / NCIMB 2260 / Gabara) (Halobacterium pharaonis).